The chain runs to 213 residues: Small ribosomal subunit protein eS1 (213 aa).

It belongs to the eukaryotic ribosomal protein eS1 family.

In Desulfurococcus amylolyticus (strain DSM 18924 / JCM 16383 / VKM B-2413 / 1221n) (Desulfurococcus kamchatkensis), this protein is Small ribosomal subunit protein eS1.